The sequence spans 341 residues: Phosphoribosylformylglycinamidine cyclo-ligase (341 aa).

Belongs to the AIR synthase family.

The protein localises to the cytoplasm. The enzyme catalyses 2-formamido-N(1)-(5-O-phospho-beta-D-ribosyl)acetamidine + ATP = 5-amino-1-(5-phospho-beta-D-ribosyl)imidazole + ADP + phosphate + H(+). Its pathway is purine metabolism; IMP biosynthesis via de novo pathway; 5-amino-1-(5-phospho-D-ribosyl)imidazole from N(2)-formyl-N(1)-(5-phospho-D-ribosyl)glycinamide: step 2/2. This is Phosphoribosylformylglycinamidine cyclo-ligase from Xanthomonas axonopodis pv. citri (strain 306).